The sequence spans 68 residues: Conotoxin Cal14.13a (68 aa).

Positions 1–21 are cleaved as a signal peptide; the sequence is MKLCVVIVLLMLAMPFNGGEA. Positions 22–38 are excised as a propeptide; sequence SRFFNQHARSQRSGMKT. Residue V66 is modified to Valine amide.

In terms of processing, contains 2 disulfide bonds. Expressed by the venom duct.

It localises to the secreted. Its function is as follows. Probable neurotoxin with unknown target. Possibly targets ion channels. The protein is Conotoxin Cal14.13a of Californiconus californicus (California cone).